Consider the following 226-residue polypeptide: Protein BASIC PENTACYSTEINE7 (226 aa).

Residues Ile42–Lys116 are disordered. The segment covering Arg66–Lys76 has biased composition (basic and acidic residues). Residues Leu88 to Lys105 show a composition bias toward basic residues.

This sequence belongs to the BBR/BPC family. In terms of tissue distribution, expressed in seedlings, leaves and pistils. Detected in anthers, in pollen grains, in young rosette, in leaf vasculature, in the lateral and primary roots, in embryo sac, and in the whole ovule.

The protein resides in the nucleus. Its function is as follows. Transcriptional regulator that specifically binds to GA-rich elements (GAGA-repeats) present in regulatory sequences of genes involved in developmental processes. The polypeptide is Protein BASIC PENTACYSTEINE7 (BPC7) (Arabidopsis thaliana (Mouse-ear cress)).